The sequence spans 313 residues: 2-phosphoglycerate kinase (313 aa).

The 88-residue stretch at 8-95 (SRILVKDKEY…LWRRVLKKHS (88 aa)) folds into the ATP-cone domain.

It belongs to the 2-phosphoglycerate kinase family. A divalent metal cation is required as a cofactor.

It carries out the reaction (2R)-2-phosphoglycerate + ATP = (2R)-2,3-bisphosphoglycerate + ADP + H(+). It participates in thermoadapter biosynthesis; cyclic 2,3-diphosphoglycerate biosynthesis; cyclic 2,3-diphosphoglycerate from 2-phospho-D-glycerate: step 1/2. Functionally, catalyzes the phosphorylation of 2-phosphoglycerate to 2,3-diphosphoglycerate. Involved in the biosynthesis of cyclic 2,3-bisphosphoglycerate, a thermoprotectant. In Methanococcus maripaludis (strain C5 / ATCC BAA-1333), this protein is 2-phosphoglycerate kinase.